The primary structure comprises 620 residues: DNA mismatch repair protein MutL (620 aa).

Positions 332–402 (SELGLEAQPE…YRTPLRPATH (71 aa)) are disordered. Positions 352-365 (SNSTNSNVSSTSYS) are enriched in low complexity. Positions 378-394 (PLTTTATSYNQGQSSYR) are enriched in polar residues.

The protein belongs to the DNA mismatch repair MutL/HexB family.

In terms of biological role, this protein is involved in the repair of mismatches in DNA. It is required for dam-dependent methyl-directed DNA mismatch repair. May act as a 'molecular matchmaker', a protein that promotes the formation of a stable complex between two or more DNA-binding proteins in an ATP-dependent manner without itself being part of a final effector complex. This Shewanella piezotolerans (strain WP3 / JCM 13877) protein is DNA mismatch repair protein MutL.